Here is a 1207-residue protein sequence, read N- to C-terminus: DNA-directed RNA polymerase subunit beta' (1207 aa).

Residues Cys-60, Cys-62, Cys-75, and Cys-78 each coordinate Zn(2+). Mg(2+)-binding residues include Asp-450, Asp-452, and Asp-454. Residues Cys-818, Cys-892, Cys-899, and Cys-902 each contribute to the Zn(2+) site.

It belongs to the RNA polymerase beta' chain family. In terms of assembly, the RNAP catalytic core consists of 2 alpha, 1 beta, 1 beta' and 1 omega subunit. When a sigma factor is associated with the core the holoenzyme is formed, which can initiate transcription. Mg(2+) serves as cofactor. Requires Zn(2+) as cofactor.

The enzyme catalyses RNA(n) + a ribonucleoside 5'-triphosphate = RNA(n+1) + diphosphate. Functionally, DNA-dependent RNA polymerase catalyzes the transcription of DNA into RNA using the four ribonucleoside triphosphates as substrates. This chain is DNA-directed RNA polymerase subunit beta', found in Lactococcus lactis subsp. lactis (strain IL1403) (Streptococcus lactis).